Here is a 654-residue protein sequence, read N- to C-terminus: Macrolide export ATP-binding/permease protein MacB (654 aa).

The 239-residue stretch at 6–244 folds into the ABC transporter domain; sequence IEISALNRIF…TSASSATDAA (239 aa). Residue 42–49 coordinates ATP; sequence GTSGSGKS. Transmembrane regions (helical) follow at residues 279-299, 534-554, 584-604, and 617-637; these read LLTM…VAIG, IAVI…LVSV, MVCL…GALF, and VTAI…FGFL.

This sequence belongs to the ABC transporter superfamily. Macrolide exporter (TC 3.A.1.122) family. Homodimer. Part of the tripartite efflux system MacAB-TolC, which is composed of an inner membrane transporter, MacB, a periplasmic membrane fusion protein, MacA, and an outer membrane component, TolC. The complex forms a large protein conduit and can translocate molecules across both the inner and outer membranes. Interacts with MacA.

It localises to the cell inner membrane. Its function is as follows. Part of the tripartite efflux system MacAB-TolC. MacB is a non-canonical ABC transporter that contains transmembrane domains (TMD), which form a pore in the inner membrane, and an ATP-binding domain (NBD), which is responsible for energy generation. Confers resistance against macrolides. In Hahella chejuensis (strain KCTC 2396), this protein is Macrolide export ATP-binding/permease protein MacB.